We begin with the raw amino-acid sequence, 219 residues long: MPDSDNDSGGPSNYAGGELSSPREQDRFLPIANVSRIMKKALPANAKISKDAKETVQECVSEFISFITGEASDKCQREKRKTINGDDLLWAMTTLGFEDYVDPLKHYLHKFREIEGERAAASTTGAGTSAASTTPPQQQHTANAAGGYAGYAAPGAGPGGMMMMMGQPMYGSPPPPPQQQQQQHHHMAMGGRGGFGHHPGGGGGGSSSSSGHGRQNRGA.

The disordered stretch occupies residues 1–26 (MPDSDNDSGGPSNYAGGELSSPREQD). A DNA-binding region spans residues 29-35 (LPIANVS). Residues 56-67 (VQECVSEFISFI) form a subunit association domain (SAD) region. Over residues 119 to 134 (AAASTTGAGTSAASTT) the composition is skewed to low complexity. Disordered regions lie at residues 119–142 (AAAS…QHTA) and 166–219 (GQPM…NRGA). Over residues 190–206 (GGRGGFGHHPGGGGGGS) the composition is skewed to gly residues.

Belongs to the NFYB/HAP3 subunit family. In terms of assembly, heterotrimeric transcription factor composed of three components, NF-YA, NF-YB and NF-YC. NF-YB and NF-YC must interact and dimerize for NF-YA association and DNA binding. Interacts with NFYC2, NFYC4 and NFYC6.

It localises to the cytoplasm. In terms of biological role, component of the NF-Y/HAP transcription factor complex. The chain is Nuclear transcription factor Y subunit B-8 from Oryza sativa subsp. japonica (Rice).